Here is a 397-residue protein sequence, read N- to C-terminus: CCA-adding enzyme (397 aa).

Residues Gly32 and Arg35 each coordinate ATP. 2 residues coordinate CTP: Gly32 and Arg35. 2 residues coordinate Mg(2+): Asp45 and Asp47. ATP contacts are provided by Arg116, Asp159, Arg162, Arg165, and Arg168. The CTP site is built by Arg116, Asp159, Arg162, Arg165, and Arg168.

It belongs to the tRNA nucleotidyltransferase/poly(A) polymerase family. Bacterial CCA-adding enzyme type 3 subfamily. Homodimer. It depends on Mg(2+) as a cofactor.

It catalyses the reaction a tRNA precursor + 2 CTP + ATP = a tRNA with a 3' CCA end + 3 diphosphate. It carries out the reaction a tRNA with a 3' CCA end + 2 CTP + ATP = a tRNA with a 3' CCACCA end + 3 diphosphate. Catalyzes the addition and repair of the essential 3'-terminal CCA sequence in tRNAs without using a nucleic acid template. Adds these three nucleotides in the order of C, C, and A to the tRNA nucleotide-73, using CTP and ATP as substrates and producing inorganic pyrophosphate. tRNA 3'-terminal CCA addition is required both for tRNA processing and repair. Also involved in tRNA surveillance by mediating tandem CCA addition to generate a CCACCA at the 3' terminus of unstable tRNAs. While stable tRNAs receive only 3'-terminal CCA, unstable tRNAs are marked with CCACCA and rapidly degraded. The polypeptide is CCA-adding enzyme (Latilactobacillus sakei subsp. sakei (strain 23K) (Lactobacillus sakei subsp. sakei)).